We begin with the raw amino-acid sequence, 359 residues long: MATLRVSLSLWNLHAGSRGAGRVYFRARARPRPGDLFQPLPGVCGAGTPCRGLCSEAESGSPKIKKPTFMDEEVQSILIKMTGLDLLKIFKPAVQETKPPTYKLMTQAQLEEATRQAIEAAKVRLKMPPVLEERTPINDVLAEDKILEGTETGKYVFTDISYSIPHRERFIVVREPSGTLRKASWEERDRMIQIYFPKEGRRVLTPVIFREENLQTMYSQDRHVDVLNLCVAQFEPDSADYIKVHHQTYEDIDKYGKYDLLRSTRHFGGMAWYFVNKKKIDGLLIDQIQRDLVDDAASLVQLYHILHPDGQSAQEAKEQAAEGLQLIKVFAKTEAQKGAYIELTLQAYQEAFISSSAAS.

This sequence belongs to the mitochondrion-specific ribosomal protein mS22 family. As to quaternary structure, component of the mitochondrial ribosome small subunit (28S) which comprises a 12S rRNA and about 30 distinct proteins.

Its subcellular location is the mitochondrion. This is Small ribosomal subunit protein mS22 (MRPS22) from Bos taurus (Bovine).